Reading from the N-terminus, the 602-residue chain is Alpha-(1-&gt;6)-mannopyranosyltransferase B (602 aa).

13 helical membrane-spanning segments follow: residues Ile105–Val125, Met148–Val168, Thr190–Tyr210, Val244–Ala264, Ile274–Trp294, Leu320–Val340, Gly368–Val388, Val404–Val424, Trp448–Leu468, Thr472–Val492, Ile503–Val523, Leu546–Leu566, and Val571–Trp591.

It belongs to the MptA/B family.

The protein resides in the membrane. It participates in cell wall biogenesis; cell wall polysaccharide biosynthesis. In terms of biological role, involved in the initiation of core alpha-(1-&gt;6) mannan biosynthesis of lipomannan (LM-A) and multi-mannosylated polymer (LM-B), extending triacylatedphosphatidyl-myo-inositol dimannoside (Ac1PIM2) and mannosylated glycolipid, 1,2-di-O-C16/C18:1-(alpha-D-mannopyranosyl)-(1-&gt;4)-(alpha-D-glucopyranosyluronic acid)-(1-&gt;3)-glycerol (Man1GlcAGroAc2), respectively. Catalyzes the addition of alpha-(1-&gt;6)-mannose residue. In Corynebacterium glutamicum (strain ATCC 13032 / DSM 20300 / JCM 1318 / BCRC 11384 / CCUG 27702 / LMG 3730 / NBRC 12168 / NCIMB 10025 / NRRL B-2784 / 534), this protein is Alpha-(1-&gt;6)-mannopyranosyltransferase B (mptB).